The sequence spans 471 residues: Trigger factor (471 aa).

Positions 169–254 (EDRVTIDYLG…VKEVAKPNEL (86 aa)) constitute a PPIase FKBP-type domain. The tract at residues 435 to 471 (VSKEELTAEDEDAASEAKPAKKAAAKKKAEEGKSEEA) is disordered. Residues 461 to 471 (KKAEEGKSEEA) show a composition bias toward basic and acidic residues.

Belongs to the FKBP-type PPIase family. Tig subfamily.

It is found in the cytoplasm. The catalysed reaction is [protein]-peptidylproline (omega=180) = [protein]-peptidylproline (omega=0). Its function is as follows. Involved in protein export. Acts as a chaperone by maintaining the newly synthesized protein in an open conformation. Functions as a peptidyl-prolyl cis-trans isomerase. In Brucella abortus (strain S19), this protein is Trigger factor.